The chain runs to 157 residues: UPF0251 protein CLJ_B1488 (157 aa).

The protein belongs to the UPF0251 family.

This Clostridium botulinum (strain 657 / Type Ba4) protein is UPF0251 protein CLJ_B1488.